The sequence spans 419 residues: 3-isopropylmalate dehydratase large subunit (419 aa).

[4Fe-4S] cluster contacts are provided by C300, C360, and C363.

This sequence belongs to the aconitase/IPM isomerase family. LeuC type 2 subfamily. As to quaternary structure, heterodimer of LeuC and LeuD. [4Fe-4S] cluster is required as a cofactor.

It carries out the reaction (2R,3S)-3-isopropylmalate = (2S)-2-isopropylmalate. The protein operates within amino-acid biosynthesis; L-leucine biosynthesis; L-leucine from 3-methyl-2-oxobutanoate: step 2/4. Functionally, catalyzes the isomerization between 2-isopropylmalate and 3-isopropylmalate, via the formation of 2-isopropylmaleate. The polypeptide is 3-isopropylmalate dehydratase large subunit (Clostridium beijerinckii (strain ATCC 51743 / NCIMB 8052) (Clostridium acetobutylicum)).